The following is a 574-amino-acid chain: Proline--tRNA ligase (574 aa).

It belongs to the class-II aminoacyl-tRNA synthetase family. ProS type 1 subfamily. Homodimer.

The protein resides in the cytoplasm. It catalyses the reaction tRNA(Pro) + L-proline + ATP = L-prolyl-tRNA(Pro) + AMP + diphosphate. Functionally, catalyzes the attachment of proline to tRNA(Pro) in a two-step reaction: proline is first activated by ATP to form Pro-AMP and then transferred to the acceptor end of tRNA(Pro). As ProRS can inadvertently accommodate and process non-cognate amino acids such as alanine and cysteine, to avoid such errors it has two additional distinct editing activities against alanine. One activity is designated as 'pretransfer' editing and involves the tRNA(Pro)-independent hydrolysis of activated Ala-AMP. The other activity is designated 'posttransfer' editing and involves deacylation of mischarged Ala-tRNA(Pro). The misacylated Cys-tRNA(Pro) is not edited by ProRS. This Fervidobacterium nodosum (strain ATCC 35602 / DSM 5306 / Rt17-B1) protein is Proline--tRNA ligase.